Consider the following 120-residue polypeptide: Large ribosomal subunit protein uL18c (120 aa).

It belongs to the universal ribosomal protein uL18 family. As to quaternary structure, part of the 50S ribosomal subunit; contacts the 5S rRNA.

The protein localises to the plastid. It localises to the chloroplast. Binds 5S rRNA, forms part of the central protuberance of the 50S subunit. In Pyropia yezoensis (Susabi-nori), this protein is Large ribosomal subunit protein uL18c (rpl18).